The chain runs to 89 residues: Venom peptide BmKAPI (89 aa).

The signal sequence occupies residues 1–22 (MKFVFASFALFVIFLCFSQSLS). Disulfide bonds link cysteine 28–cysteine 66, cysteine 37–cysteine 62, cysteine 41–cysteine 55, cysteine 46–cysteine 86, and cysteine 68–cysteine 80. The region spanning 28–86 (CRDNEVFDNCISNCGPPRCSNILNTYPCTNLGPLCTPGCKCKDGRVYDNQGRCVLQTEC) is the TIL domain.

It belongs to the serine protease inhibitor-like (TIL domain-containing) family. Expressed by the venom gland.

The protein resides in the secreted. Functionally, serine protease inhibitor. The protein is Venom peptide BmKAPI of Olivierus martensii (Manchurian scorpion).